The following is a 1084-amino-acid chain: Carbamoyl phosphate synthase large chain (1084 aa).

Residues 1 to 401 (MPRRQDVEKV…ALLKAVRSLE (401 aa)) are carboxyphosphate synthetic domain. 12 residues coordinate ATP: Arg-129, Arg-169, Gly-175, Gly-176, Arg-208, Leu-210, Glu-215, Gly-241, Val-242, His-243, Gln-284, and Glu-298. One can recognise an ATP-grasp 1 domain in the interval 133-327 (RALMKEIGEP…IAKVAAKIAV (195 aa)). 3 residues coordinate Mg(2+): Gln-284, Glu-298, and Asn-300. The Mn(2+) site is built by Gln-284, Glu-298, and Asn-300. The oligomerization domain stretch occupies residues 402–546 (TGRDGLFHPA…YSCYDEENEA (145 aa)). The carbamoyl phosphate synthetic domain stretch occupies residues 547-947 (VSPPGRKAVV…ALYKALLASG (401 aa)). One can recognise an ATP-grasp 2 domain in the interval 672 to 862 (DQLLSDLSIP…LAKVATQVIA (191 aa)). ATP contacts are provided by Arg-708, Arg-747, Glu-753, Gly-778, Val-779, His-780, Ser-781, Gln-821, and Glu-833. 3 residues coordinate Mg(2+): Gln-821, Glu-833, and Asn-835. Gln-821, Glu-833, and Asn-835 together coordinate Mn(2+). In terms of domain architecture, MGS-like spans 948 to 1084 (VRVPHRGTVL…VGISAVQDWV (137 aa)). Positions 948–1084 (VRVPHRGTVL…VGISAVQDWV (137 aa)) are allosteric domain.

The protein belongs to the CarB family. In terms of assembly, composed of two chains; the small (or glutamine) chain promotes the hydrolysis of glutamine to ammonia, which is used by the large (or ammonia) chain to synthesize carbamoyl phosphate. Tetramer of heterodimers (alpha,beta)4. Mg(2+) is required as a cofactor. It depends on Mn(2+) as a cofactor.

The enzyme catalyses hydrogencarbonate + L-glutamine + 2 ATP + H2O = carbamoyl phosphate + L-glutamate + 2 ADP + phosphate + 2 H(+). The catalysed reaction is hydrogencarbonate + NH4(+) + 2 ATP = carbamoyl phosphate + 2 ADP + phosphate + 2 H(+). Its pathway is amino-acid biosynthesis; L-arginine biosynthesis; carbamoyl phosphate from bicarbonate: step 1/1. The protein operates within pyrimidine metabolism; UMP biosynthesis via de novo pathway; (S)-dihydroorotate from bicarbonate: step 1/3. In terms of biological role, large subunit of the glutamine-dependent carbamoyl phosphate synthetase (CPSase). CPSase catalyzes the formation of carbamoyl phosphate from the ammonia moiety of glutamine, carbonate, and phosphate donated by ATP, constituting the first step of 2 biosynthetic pathways, one leading to arginine and/or urea and the other to pyrimidine nucleotides. The large subunit (synthetase) binds the substrates ammonia (free or transferred from glutamine from the small subunit), hydrogencarbonate and ATP and carries out an ATP-coupled ligase reaction, activating hydrogencarbonate by forming carboxy phosphate which reacts with ammonia to form carbamoyl phosphate. This chain is Carbamoyl phosphate synthase large chain, found in Symbiobacterium thermophilum (strain DSM 24528 / JCM 14929 / IAM 14863 / T).